The chain runs to 290 residues: 7-methylguanosine phosphate-specific 5'-nucleotidase A (290 aa).

Asp-39 (nucleophile) is an active-site residue. The Mg(2+) site is built by Asp-39 and Asp-41. Asp-41 functions as the Proton donor in the catalytic mechanism. Glu-86 contacts CMP. Residue Glu-86 participates in N(7)-methyl-GMP binding. Substrate is bound by residues 154–155 and Lys-203; that span reads SA. Asp-228 contributes to the Mg(2+) binding site.

The protein belongs to the pyrimidine 5'-nucleotidase family. As to quaternary structure, monomer.

It is found in the cytoplasm. The catalysed reaction is N(7)-methyl-GMP + H2O = N(7)-methylguanosine + phosphate. The enzyme catalyses CMP + H2O = cytidine + phosphate. It catalyses the reaction a ribonucleoside 5'-phosphate + H2O = a ribonucleoside + phosphate. Specifically hydrolyzes 7-methylguanosine monophosphate (m(7)GMP) to 7-methylguanosine and inorganic phosphate. The specific activity for m(7)GMP may protect cells against undesired salvage of m(7)GMP and its incorporation into nucleic acids. Also has weak activity for CMP. UMP and purine nucleotides are poor substrates. This Xenopus laevis (African clawed frog) protein is 7-methylguanosine phosphate-specific 5'-nucleotidase A (Nt5c3b-a).